We begin with the raw amino-acid sequence, 482 residues long: MEPFPRILDDRLPRNMRRPRPIDKMPMRKIVMLGANARTQRSVSSIQLPAEYSPSASSAPYFNYSPDDFILDLRSHQSDEIYENGNSNHEKDEKKALKELLHERWENAKQYNAFNYPLNCMYRCLDGKYDLSMQLNIERGELRRKPMHFKNIKEPFNHLRFNFAKLHDHEILFYLKCDTDPISNDLLDRHLVAVNASPLERDHSLIVPSVNKCSPQVLTLQAVRIAVDLMLLVDDDMFHILFNSLLGQASVNHLHLHAMYWPYDSDLINRKCEPLHDVPNVYVIRPPVWICPAIVFQLDSLDNYEQFKMNIYKCVEHLTESNQAHNLFLARAQPIRTTGAEKEEDRRGERPQLVTCYVFPRMNMIGAKPPSNFNPAANELAGNLTSYTIRFFESANEQSVIRIIEEEASLDDDTFRSLCFDLADVLIGRSVGTSRPQDLDTLAGLTSPEIDELRDSFQSFMPRSPSIRHRSSTRAQSDEGSK.

A disordered region spans residues 1–21 (MEPFPRILDDRLPRNMRRPRP). The active-site Tele-GMP-histidine intermediate is His255. The segment at 461-482 (MPRSPSIRHRSSTRAQSDEGSK) is disordered.

Belongs to the GDPGP1 family. In terms of tissue distribution, expressed throughout the neuronal system, in the spermatheca and anterior hypodermal cells.

The protein localises to the cytoplasm. It carries out the reaction GDP-alpha-D-glucose + phosphate = alpha-D-glucose 1-phosphate + GDP + H(+). Functionally, specific and highly efficient GDP-D-glucose phosphorylase regulating the levels of GDP-D-glucose in cells. The chain is GDP-D-glucose phosphorylase 1 from Caenorhabditis elegans.